The sequence spans 919 residues: Leucine--tRNA ligase (919 aa).

The short motif at 83-93 is the 'HIGH' region element; that stretch reads PYPSGKLHMGH. Residues 670–674 carry the 'KMSKS' region motif; it reads KMSKS. An ATP-binding site is contributed by Lys-673.

This sequence belongs to the class-I aminoacyl-tRNA synthetase family.

Its subcellular location is the cytoplasm. The catalysed reaction is tRNA(Leu) + L-leucine + ATP = L-leucyl-tRNA(Leu) + AMP + diphosphate. The chain is Leucine--tRNA ligase from Psychrobacter cryohalolentis (strain ATCC BAA-1226 / DSM 17306 / VKM B-2378 / K5).